Here is a 527-residue protein sequence, read N- to C-terminus: Arginine--tRNA ligase (527 aa).

The short motif at 112 to 122 (ANPTGPLHIGH) is the 'HIGH' region element.

The protein belongs to the class-I aminoacyl-tRNA synthetase family. Monomer.

It localises to the cytoplasm. The enzyme catalyses tRNA(Arg) + L-arginine + ATP = L-arginyl-tRNA(Arg) + AMP + diphosphate. The protein is Arginine--tRNA ligase of Nitratiruptor sp. (strain SB155-2).